A 769-amino-acid polypeptide reads, in one-letter code: Endonuclease MutS2 (769 aa).

Residue Gly335–Thr342 coordinates ATP. The region spanning Ile694–Val769 is the Smr domain.

Belongs to the DNA mismatch repair MutS family. MutS2 subfamily. In terms of assembly, homodimer. Binds to stalled ribosomes, contacting rRNA.

Its function is as follows. Endonuclease that is involved in the suppression of homologous recombination and thus may have a key role in the control of bacterial genetic diversity. Acts as a ribosome collision sensor, splitting the ribosome into its 2 subunits. Detects stalled/collided 70S ribosomes which it binds and splits by an ATP-hydrolysis driven conformational change. Acts upstream of the ribosome quality control system (RQC), a ribosome-associated complex that mediates the extraction of incompletely synthesized nascent chains from stalled ribosomes and their subsequent degradation. Probably generates substrates for RQC. The sequence is that of Endonuclease MutS2 from Maridesulfovibrio salexigens (strain ATCC 14822 / DSM 2638 / NCIMB 8403 / VKM B-1763) (Desulfovibrio salexigens).